We begin with the raw amino-acid sequence, 182 residues long: PRA1 family protein D (182 aa).

A2 bears the N-acetylalanine mark. Helical transmembrane passes span 68 to 88 (LITR…WFFL), 107 to 127 (IVAV…GVWL), and 129 to 149 (ALTT…LRGT). The tract at residues 163 to 182 (PMLSTSGGGNDGARGDYSGI) is disordered.

Belongs to the PRA1 family. As to quaternary structure, interacts with PRA1F2 and PRA1F3. Interacts with the cauliflower mosaic virus (CaMV) movement protein (via N-terminus). As to expression, expressed in hypocotyls, roots, lateral roots, lateral root caps, columella cells, leaves, shoot apex, stems and flowers.

Its subcellular location is the endosome membrane. Functionally, may be involved in both secretory and endocytic intracellular trafficking in the endosomal/prevacuolar compartments. The protein is PRA1 family protein D (PRA1D) of Arabidopsis thaliana (Mouse-ear cress).